The following is a 107-amino-acid chain: Vasopressin-neurophysin 2 (107 aa).

C1 and C6 are oxidised to a cystine. A Glycine amide modification is found at G9. Disulfide bonds link C22-C66, C25-C39, C33-C56, C40-C46, C73-C85, C79-C97, and C86-C91.

Belongs to the vasopressin/oxytocin family. As to quaternary structure, interacts with vasopressin receptors V1bR/AVPR1B (Ki=85 pM), V1aR/AVPR1A (Ki=0.6 nM) and V2R/AVPR2 (Ki=4.9 nM). Interacts with oxytocin receptor (OXTR) (Ki=110 nM).

The protein resides in the secreted. Functionally, neurophysin 2 specifically binds vasopressin. Vasopressin has a direct antidiuretic action on the kidney, it also causes vasoconstriction of the peripheral vessels. Acts by binding to vasopressin receptors (V1bR/AVPR1B, V1aR/AVPR1A, and V2R/AVPR2). This Balaenoptera physalus (Fin whale) protein is Vasopressin-neurophysin 2 (AVP).